Here is a 98-residue protein sequence, read N- to C-terminus: Small ribosomal subunit protein bS20 (98 aa).

It belongs to the bacterial ribosomal protein bS20 family.

Its function is as follows. Binds directly to 16S ribosomal RNA. The chain is Small ribosomal subunit protein bS20 from Kosmotoga olearia (strain ATCC BAA-1733 / DSM 21960 / TBF 19.5.1).